The sequence spans 558 residues: Energy-dependent translational throttle protein EttA (558 aa).

2 ABC transporter domains span residues Tyr-6–Gly-256 and Val-322–His-552. Gly-38–Ser-45 lines the ATP pocket. Positions Gly-94–Asp-136 are arm. The interval Gly-239–Val-320 is ptIM. Gly-354–Thr-361 serves as a coordination point for ATP.

This sequence belongs to the ABC transporter superfamily. ABCF family. Translational throttle EttA subfamily. As to quaternary structure, monomer. Probably contacts ribosomal proteins L1, L5, L33 and S7, the 16S and 23S rRNA and the P-site containing tRNA(fMet).

It localises to the cytoplasm. It carries out the reaction ATP + H2O = ADP + phosphate + H(+). Functionally, a translation factor that gates the progression of the 70S ribosomal initiation complex (IC, containing tRNA(fMet) in the P-site) into the translation elongation cycle by using a mechanism sensitive to the ATP/ADP ratio. Binds to the 70S ribosome E-site where it modulates the state of the translating ribosome during subunit translocation. ATP hydrolysis probably frees it from the ribosome, which can enter the elongation phase. The sequence is that of Energy-dependent translational throttle protein EttA from Mycobacterium tuberculosis (strain CDC 1551 / Oshkosh).